The primary structure comprises 157 residues: 2-C-methyl-D-erythritol 2,4-cyclodiphosphate synthase (157 aa).

Residues D8 and H10 each coordinate a divalent metal cation. 4-CDP-2-C-methyl-D-erythritol 2-phosphate contacts are provided by residues 8–10 (DVH) and 34–35 (HS). Residue H42 coordinates a divalent metal cation. Residues 56 to 58 (DIG), 61 to 65 (FPDTD), 100 to 106 (AQAPKMA), 132 to 135 (TTTE), F139, and R142 contribute to the 4-CDP-2-C-methyl-D-erythritol 2-phosphate site.

This sequence belongs to the IspF family. Homotrimer. Requires a divalent metal cation as cofactor.

The enzyme catalyses 4-CDP-2-C-methyl-D-erythritol 2-phosphate = 2-C-methyl-D-erythritol 2,4-cyclic diphosphate + CMP. It participates in isoprenoid biosynthesis; isopentenyl diphosphate biosynthesis via DXP pathway; isopentenyl diphosphate from 1-deoxy-D-xylulose 5-phosphate: step 4/6. In terms of biological role, involved in the biosynthesis of isopentenyl diphosphate (IPP) and dimethylallyl diphosphate (DMAPP), two major building blocks of isoprenoid compounds. Catalyzes the conversion of 4-diphosphocytidyl-2-C-methyl-D-erythritol 2-phosphate (CDP-ME2P) to 2-C-methyl-D-erythritol 2,4-cyclodiphosphate (ME-CPP) with a corresponding release of cytidine 5-monophosphate (CMP). This Pseudomonas fluorescens (strain SBW25) protein is 2-C-methyl-D-erythritol 2,4-cyclodiphosphate synthase.